Consider the following 381-residue polypeptide: Cytochrome b (381 aa).

The next 4 helical transmembrane spans lie at Phe-33 to Met-53, Trp-77 to Val-98, Trp-113 to Leu-133, and Phe-178 to Leu-198. The heme b site is built by His-83 and His-97. His-182 and His-196 together coordinate heme b. Residue His-201 participates in a ubiquinone binding. The next 4 helical transmembrane spans lie at Ile-226–Ser-246, Leu-288–His-308, Ile-320–Gly-340, and Phe-347–Pro-367.

It belongs to the cytochrome b family. The cytochrome bc1 complex contains 11 subunits: 3 respiratory subunits (MT-CYB, CYC1 and UQCRFS1), 2 core proteins (UQCRC1 and UQCRC2) and 6 low-molecular weight proteins (UQCRH/QCR6, UQCRB/QCR7, UQCRQ/QCR8, UQCR10/QCR9, UQCR11/QCR10 and a cleavage product of UQCRFS1). This cytochrome bc1 complex then forms a dimer. Heme b serves as cofactor.

Its subcellular location is the mitochondrion inner membrane. Component of the ubiquinol-cytochrome c reductase complex (complex III or cytochrome b-c1 complex) that is part of the mitochondrial respiratory chain. The b-c1 complex mediates electron transfer from ubiquinol to cytochrome c. Contributes to the generation of a proton gradient across the mitochondrial membrane that is then used for ATP synthesis. The protein is Cytochrome b (MT-CYB) of Pseudantechinus bilarni (Sandstone dibbler).